The primary structure comprises 168 residues: Cyclin-dependent kinase 4 inhibitor C (168 aa).

ANK repeat units lie at residues 4 to 33, 37 to 65, 69 to 98, 102 to 132, and 136 to 165; these read PWGNELASAAARGDLEQLTSLLQNNVNVNA, FGRTALQVMKLGNPEIARRLLLRGANPNL, TGFAVIHDAARAGFLDTVQALLEFQADVNI, EGNLPLHLAAKEGHLPVVEFLMKHTACNVGH, and KGDTAFDLARFYGRNEVISLMEANGVGGAT.

The protein belongs to the CDKN2 cyclin-dependent kinase inhibitor family. In terms of assembly, heterodimer of p18 with CDK6.

In terms of biological role, interacts strongly with CDK6, weakly with CDK4. Inhibits cell growth and proliferation with a correlated dependence on endogenous retinoblastoma protein RB. This chain is Cyclin-dependent kinase 4 inhibitor C (Cdkn2c), found in Mus musculus (Mouse).